A 1528-amino-acid polypeptide reads, in one-letter code: Multidrug resistance-associated protein 1 (1528 aa).

Residues 1 to 33 (MALRSFCSADGSDPLWDWNVTWHTSNPDFTKCF) lie on the Extracellular side of the membrane. Asn-19 carries an N-linked (GlcNAc...) asparagine glycan. A helical transmembrane segment spans residues 34 to 54 (QNTVLTWVPCFYLWSCFPLYF). Over 55–74 (FYLSRHDRGYIQMTHLNKTK) the chain is Cytoplasmic. The chain crosses the membrane as a helical span at residues 75 to 95 (TALGFFLWIICWADLFYSFWE). Residues 96 to 100 (RSQGV) are Extracellular-facing. A helical membrane pass occupies residues 101–121 (LRAPVLLVSPTLLGITMLLAT). Residues 122–133 (FLIQLERRKGVQ) lie on the Cytoplasmic side of the membrane. The helical transmembrane segment at 134-154 (SSGIMLTFWLVALLCALAILR) threads the bilayer. Over 155–172 (SKIISALKKDAHVDVFRD) the chain is Extracellular. The chain crosses the membrane as a helical span at residues 173–193 (STFYLYFTLVLVQLVLSCFSD). Residues 194-317 (CSPLFSETVH…KDREPSLFKV (124 aa)) are Cytoplasmic-facing. A Phosphotyrosine modification is found at Tyr-277. Ser-290 is modified (phosphoserine). The chain crosses the membrane as a helical span at residues 318–338 (LYKTFGPYFLMSFLYKALHDL). The 284-residue stretch at 326-609 (FLMSFLYKAL…LPMVISSIVQ (284 aa)) folds into the ABC transmembrane type-1 1 domain. The Extracellular portion of the chain corresponds to 339–364 (MMFAGPKILELIINFVNDREAPDWQG). Residues 365-385 (YFYTALLFVSACLQTLALHQY) form a helical membrane-spanning segment. The Cytoplasmic segment spans residues 386–441 (FHICFVSGMRIKTAVVGAVYRKALLITNAARKSSTVGEIVNLMSVDAQRFMDLATY). The chain crosses the membrane as a helical span at residues 442–462 (INMIWSAPLQVILALYFLWLS). At 463 to 465 (LGP) the chain is on the extracellular side. The helical transmembrane segment at 466-486 (SVLAGVAVMILMVPLNAVMAM) threads the bilayer. Topologically, residues 487-548 (KTKTYQVAHM…VLKKSAYLAA (62 aa)) are cytoplasmic. N6-succinyllysine is present on Lys-504. Residues 549-569 (VGTFTWVCTPFLVALSTFAVF) traverse the membrane as a helical segment. The Extracellular portion of the chain corresponds to 570-591 (VTVDERNILDAKKAFVSLALFN). The chain crosses the membrane as a helical span at residues 592–612 (ILRFPLNILPMVISSIVQASV). Residues 613–963 (SLKRLRIFLS…VQLSVYWNYM (351 aa)) lie on the Cytoplasmic side of the membrane. Residues 644–868 (ITVKNATFTW…DGAFAEFLRT (225 aa)) form the ABC transporter 1 domain. 678-685 (GQVGCGKS) is a binding site for ATP. 2 disordered regions span residues 876–895 (LASEDDSVSGSGKESKPVEN) and 909–929 (RHLSNSSSHSGDTSQQHSSIA). Ser-878, Ser-882, Ser-912, and Ser-927 each carry phosphoserine. Residues 910-929 (HLSNSSSHSGDTSQQHSSIA) are compositionally biased toward polar residues. Residues 964 to 984 (KAIGLFITFLSIFLFLCNHVS) form a helical membrane-spanning segment. One can recognise an ABC transmembrane type-1 2 domain in the interval 971-1253 (TFLSIFLFLC…LVRMSSEMET (283 aa)). The Extracellular portion of the chain corresponds to 985 to 1022 (ALASNYWLSLWTDDPPVVNGTQANRNFRLSVYGALGIL). The N-linked (GlcNAc...) asparagine glycan is linked to Asn-1003. Residues 1023–1043 (QGAAIFGYSMAVSIGGIFASR) traverse the membrane as a helical segment. Residues 1044-1086 (RLHLDLLYNVLRSPMSFFERTPSGNLVNRFSKELDTVDSMIPQ) lie on the Cytoplasmic side of the membrane. A helical membrane pass occupies residues 1087 to 1107 (VIKMFMGSLFSVIGAVIIILL). Residue Ala-1108 is a topological domain, extracellular. Residues 1109-1129 (TPIAAVIIPPLGLVYFFVQRF) traverse the membrane as a helical segment. Residues 1130-1200 (YVASSRQLKR…VANRWLAVRL (71 aa)) are Cytoplasmic-facing. Residues 1201-1221 (ECVGNCIVLFAALFAVISRHS) traverse the membrane as a helical segment. Topologically, residues 1222 to 1223 (LS) are extracellular. A helical transmembrane segment spans residues 1224–1244 (AGLVGLSVSYSLQITAYLNWL). Residues 1245 to 1528 (VRMSSEMETN…YSMAKDAGLV (284 aa)) are Cytoplasmic-facing. The 235-residue stretch at 1290 to 1524 (VEFRDYCLRY…RGIFYSMAKD (235 aa)) folds into the ABC transporter 2 domain. Residue 1324-1331 (GRTGAGKS) participates in ATP binding.

The protein belongs to the ABC transporter superfamily. ABCC family. Conjugate transporter (TC 3.A.1.208) subfamily.

It is found in the cell membrane. The protein localises to the basolateral cell membrane. The catalysed reaction is ATP + H2O + xenobioticSide 1 = ADP + phosphate + xenobioticSide 2.. It carries out the reaction an S-substituted glutathione(in) + ATP + H2O = an S-substituted glutathione(out) + ADP + phosphate + H(+). It catalyses the reaction leukotriene C4(in) + ATP + H2O = leukotriene C4(out) + ADP + phosphate + H(+). The enzyme catalyses sphing-4-enine 1-phosphate(in) + ATP + H2O = sphing-4-enine 1-phosphate(out) + ADP + phosphate + H(+). The catalysed reaction is 17beta-estradiol 17-O-(beta-D-glucuronate)(in) + ATP + H2O = 17beta-estradiol 17-O-(beta-D-glucuronate)(out) + ADP + phosphate + H(+). It carries out the reaction vincristine(in) + ATP + H2O = vincristine(out) + ADP + phosphate + H(+). It catalyses the reaction daunorubicin(in) + ATP + H2O = daunorubicin(out) + ADP + phosphate + H(+). The enzyme catalyses 2',3'-cGAMP(in) + ATP + H2O = 2',3'-cGAMP(out) + ADP + phosphate + H(+). The catalysed reaction is S-[(2E,6E,10E)-geranylgeranyl]-L-glutathione(in) + ATP + H2O = S-[(2E,6E,10E)-geranylgeranyl]-L-glutathione(out) + ADP + phosphate + H(+). It carries out the reaction prostaglandin A2-S-(R)-glutathione(in) + ATP + H2O = prostaglandin A2-S-(R)-glutathione(out) + ADP + phosphate + H(+). It catalyses the reaction prostaglandin A2-S-(S)-glutathione(in) + ATP + H2O = prostaglandin A2-S-(S)-glutathione(out) + ADP + phosphate + H(+). Its activity is regulated as follows. MK 571 inhibits sphingosine 1-phosphate and leukotriene C4 export. Functionally, mediates export of organic anions and drugs from the cytoplasm. Mediates ATP-dependent transport of glutathione and glutathione conjugates, leukotriene C4, estradiol-17-beta-o-glucuronide, methotrexate, antiviral drugs and other xenobiotics. Confers resistance to anticancer drugs by decreasing accumulation of drugs in cells, and by mediating ATP- and GSH-dependent drug export. Hydrolyzes ATP with low efficiency. Catalyzes the export of sphingosine 1-phosphate from mast cells independently of their degranulation. Participates in inflammatory response by allowing export of leukotriene C4 from leukotriene C4-synthesizing cells. Mediates ATP-dependent, GSH-independent cyclic GMP-AMP (cGAMP) export. Thus, by limiting intracellular cGAMP concentrations negatively regulates the cGAS-STING pathway. Exports S-geranylgeranyl-glutathione (GGG) in lymphoid cells and stromal compartments of lymphoid organs. ABCC1 (via extracellular transport) with GGT5 (via GGG catabolism) establish GGG gradients within lymphoid tissues to position P2RY8-positive lymphocytes at germinal centers in lymphoid follicles and restrict their chemotactic transmigration from blood vessels to the bone marrow parenchyma. Mediates basolateral export of GSH-conjugated R- and S-prostaglandin A2 diastereomers in polarized epithelial cells. The sequence is that of Multidrug resistance-associated protein 1 from Mus musculus (Mouse).